Reading from the N-terminus, the 179-residue chain is Ribosome maturation factor RimM (179 aa).

A PRC barrel domain is found at 100–176 (HGEYHLTELI…FILLTPPSGL (77 aa)).

The protein belongs to the RimM family. As to quaternary structure, binds ribosomal protein uS19.

The protein resides in the cytoplasm. Its function is as follows. An accessory protein needed during the final step in the assembly of 30S ribosomal subunit, possibly for assembly of the head region. Essential for efficient processing of 16S rRNA. May be needed both before and after RbfA during the maturation of 16S rRNA. It has affinity for free ribosomal 30S subunits but not for 70S ribosomes. This is Ribosome maturation factor RimM from Prochlorococcus marinus subsp. pastoris (strain CCMP1986 / NIES-2087 / MED4).